We begin with the raw amino-acid sequence, 260 residues long: MIVLKWLFFTISPCDAAEPWQLGFQDAATPIMQGIIDLHHDIFFFLILILVFVLWILVRALWHFHYKKNAIPQRIVHGTTIEILWTIFPSIILMFIAIPSFALLYSMDEVVVDPAITIKAIGHQWYWTYEYSDYNSSDEQSLTFDSYMIPEEDLELGQLRLLEVDNRVVVPAKTHLRIIVTSADVLHSWAVPSLGVKCDAVPGRLNQISILVQREGVYYGQCSEICGTNHAFMPIVVEAVSRKDYGSWVSNQLIPQTGEA.

Residues 1–41 (MIVLKWLFFTISPCDAAEPWQLGFQDAATPIMQGIIDLHHD) are Mitochondrial intermembrane-facing. Residues 42-62 (IFFFLILILVFVLWILVRALW) form a helical membrane-spanning segment. Residues 63-86 (HFHYKKNAIPQRIVHGTTIEILWT) are Mitochondrial matrix-facing. Residues 87–107 (IFPSIILMFIAIPSFALLYSM) form a helical membrane-spanning segment. The Mitochondrial intermembrane segment spans residues 108 to 260 (DEVVVDPAIT…NQLIPQTGEA (153 aa)). Positions 187, 222, 224, 226, 230, and 233 each coordinate Cu cation. Glu224 provides a ligand contact to Mg(2+).

Belongs to the cytochrome c oxidase subunit 2 family. Component of the cytochrome c oxidase (complex IV, CIV), a multisubunit enzyme composed of a catalytic core of 3 subunits and several supernumerary subunits. The complex exists as a monomer or a dimer and forms supercomplexes (SCs) in the inner mitochondrial membrane with ubiquinol-cytochrome c oxidoreductase (cytochrome b-c1 complex, complex III, CIII). Requires Cu cation as cofactor.

The protein localises to the mitochondrion inner membrane. It catalyses the reaction 4 Fe(II)-[cytochrome c] + O2 + 8 H(+)(in) = 4 Fe(III)-[cytochrome c] + 2 H2O + 4 H(+)(out). Its function is as follows. Component of the cytochrome c oxidase, the last enzyme in the mitochondrial electron transport chain which drives oxidative phosphorylation. The respiratory chain contains 3 multisubunit complexes succinate dehydrogenase (complex II, CII), ubiquinol-cytochrome c oxidoreductase (cytochrome b-c1 complex, complex III, CIII) and cytochrome c oxidase (complex IV, CIV), that cooperate to transfer electrons derived from NADH and succinate to molecular oxygen, creating an electrochemical gradient over the inner membrane that drives transmembrane transport and the ATP synthase. Cytochrome c oxidase is the component of the respiratory chain that catalyzes the reduction of oxygen to water. Electrons originating from reduced cytochrome c in the intermembrane space (IMS) are transferred via the dinuclear copper A center (CU(A)) of subunit 2 and heme A of subunit 1 to the active site in subunit 1, a binuclear center (BNC) formed by heme A3 and copper B (CU(B)). The BNC reduces molecular oxygen to 2 water molecules using 4 electrons from cytochrome c in the IMS and 4 protons from the mitochondrial matrix. The protein is Cytochrome c oxidase subunit 2 (COX2) of Arabidopsis thaliana (Mouse-ear cress).